We begin with the raw amino-acid sequence, 304 residues long: UDP-3-O-acyl-N-acetylglucosamine deacetylase (304 aa).

Positions 78, 237, and 241 each coordinate Zn(2+). His-264 serves as the catalytic Proton donor.

The protein belongs to the LpxC family. Zn(2+) is required as a cofactor.

The catalysed reaction is a UDP-3-O-[(3R)-3-hydroxyacyl]-N-acetyl-alpha-D-glucosamine + H2O = a UDP-3-O-[(3R)-3-hydroxyacyl]-alpha-D-glucosamine + acetate. It participates in glycolipid biosynthesis; lipid IV(A) biosynthesis; lipid IV(A) from (3R)-3-hydroxytetradecanoyl-[acyl-carrier-protein] and UDP-N-acetyl-alpha-D-glucosamine: step 2/6. Catalyzes the hydrolysis of UDP-3-O-myristoyl-N-acetylglucosamine to form UDP-3-O-myristoylglucosamine and acetate, the committed step in lipid A biosynthesis. In Thioalkalivibrio sulfidiphilus (strain HL-EbGR7), this protein is UDP-3-O-acyl-N-acetylglucosamine deacetylase.